The chain runs to 848 residues: Oligopeptide transport ATP-binding protein OppF (848 aa).

In terms of domain architecture, ABC transporter spans 13–785; it reads VKALSMMFKV…PVHPYTRSLI (773 aa). Residue 47–54 coordinates ATP; it reads GESGSGKS.

Belongs to the ABC transporter superfamily. As to quaternary structure, the complex is composed of two ATP-binding proteins (OppD and OppF), two transmembrane proteins (OppB and OppC) and a solute-binding protein (OppA).

The protein resides in the cell membrane. It carries out the reaction a [peptide](out) + ATP + H2O = a [peptide](in) + ADP + phosphate + H(+). Part of the ABC transporter complex OppABCDF involved in the uptake of oligopeptides. Probably responsible for energy coupling to the transport system. The protein is Oligopeptide transport ATP-binding protein OppF (oppF) of Mycoplasma genitalium (strain ATCC 33530 / DSM 19775 / NCTC 10195 / G37) (Mycoplasmoides genitalium).